We begin with the raw amino-acid sequence, 701 residues long: Octapeptide-repeat antigen (701 aa).

Residues asparagine 40, asparagine 41, asparagine 76, asparagine 111, asparagine 127, asparagine 139, asparagine 181, asparagine 189, asparagine 311, asparagine 334, asparagine 344, asparagine 477, and asparagine 557 are each glycosylated (N-linked (GlcNAc...) asparagine). Residues 120-140 form a disordered region; it reads IENEEKSNGSRKSSNKQKYNE. A disordered region spans residues 641 to 701; the sequence is LSGSSTGSMN…IKSGSKDHIK (61 aa). A compositionally biased stretch (low complexity) spans 642–655; that stretch reads SGSSTGSMNNGKSG. A run of 6 repeats spans residues 653 to 660, 661 to 668, 669 to 676, 677 to 684, 685 to 692, and 693 to 700. The interval 653–700 is 6 X 8 AA approximate tandem repeats; that stretch reads KSGSKSDIKGGSKDDIKSGSKDDIKSGSKADIKSGSKDDIKSGSKDHI. Positions 656 to 701 are enriched in basic and acidic residues; that stretch reads SKSDIKGGSKDDIKSGSKDDIKSGSKADIKSGSKDDIKSGSKDHIK.

This sequence belongs to the ATP-dependent AMP-binding enzyme family.

The protein localises to the parasitophorous vacuole. The sequence is that of Octapeptide-repeat antigen from Plasmodium falciparum (isolate NF7 / Ghana).